The primary structure comprises 164 residues: Large ribosomal subunit protein bL21 (164 aa).

The segment at 105–164 (KAPTIGPRAKKEKKVEAAPADGEAPAKKAPAKKAAAKKAAPKAAAKKAPAKKAAPKAKSE) is disordered. Residues 133–164 (APAKKAAAKKAAPKAAAKKAPAKKAAPKAKSE) are compositionally biased toward basic residues.

Belongs to the bacterial ribosomal protein bL21 family. As to quaternary structure, part of the 50S ribosomal subunit. Contacts protein L20.

Functionally, this protein binds to 23S rRNA in the presence of protein L20. In Afipia carboxidovorans (strain ATCC 49405 / DSM 1227 / KCTC 32145 / OM5) (Oligotropha carboxidovorans), this protein is Large ribosomal subunit protein bL21.